Reading from the N-terminus, the 238-residue chain is Ribonuclease PH (238 aa).

Residues arginine 86 and 124–126 (GTR) contribute to the phosphate site.

The protein belongs to the RNase PH family. As to quaternary structure, homohexameric ring arranged as a trimer of dimers.

The enzyme catalyses tRNA(n+1) + phosphate = tRNA(n) + a ribonucleoside 5'-diphosphate. Its function is as follows. Phosphorolytic 3'-5' exoribonuclease that plays an important role in tRNA 3'-end maturation. Removes nucleotide residues following the 3'-CCA terminus of tRNAs; can also add nucleotides to the ends of RNA molecules by using nucleoside diphosphates as substrates, but this may not be physiologically important. Probably plays a role in initiation of 16S rRNA degradation (leading to ribosome degradation) during starvation. In Dichelobacter nodosus (strain VCS1703A), this protein is Ribonuclease PH.